We begin with the raw amino-acid sequence, 438 residues long: MISLRHTALGLALSLAFTGQALAVTTIPFWHSMEGELGKEVDSLAQRFNQANPDYKIVPVYKGNYEQNLSAGIAAFRTGNAPAILQVYEVGTATMMASKAIKPVYEVFKDAGINFDESQFVPTVAGYYTDAKSGHLLSQPFNSSTPVLYYNKDAFKKAGLDPEQPPKTWQELADYTAKLRAAGMKCGYASGWQGWIQLENFSAWNGLPFASKNNGFDGTDAVLEFNKPEQVKHIALLEEMNKKGDFSYVGRKDESTEKFYNGDCAMTTASSGSLANIRQYAKFNYGVGMMPYDADIKGAPQNAIIGGASLWVMQGKDKETYTGVAKFLDFLAKPENAAEWHQKTGYLPITTAAYELTREQGYYDKNPGADIATRQMLNKPPLPFTKGLRLGNMPQIRTIVDEELESVWTGKKTPQQALDTAVDRGNQLLRRFEKASKS.

An N-terminal signal peptide occupies residues 1–23 (MISLRHTALGLALSLAFTGQALA). Positions 65, 89, 144, 270, 307, 346, and 397 each coordinate sn-glycerol 3-phosphate.

It belongs to the bacterial solute-binding protein 1 family. As to quaternary structure, the complex is composed of two ATP-binding proteins (UgpC), two transmembrane proteins (UgpA and UgpE) and a solute-binding protein (UgpB).

It is found in the periplasm. In terms of biological role, part of the ABC transporter complex UgpBAEC involved in sn-glycerol-3-phosphate (G3P) import. Binds G3P. The protein is sn-glycerol-3-phosphate-binding periplasmic protein UgpB (ugpB) of Salmonella typhi.